The chain runs to 258 residues: Thiamine thiazole synthase (258 aa).

NAD(+) contacts are provided by residues Ser-36, 55-56 (ER), Gly-63, Ile-127, and 153-155 (HVD). Fe cation-binding residues include Asp-155 and His-170. Position 224 (Met-224) interacts with NAD(+). A glycine-binding site is contributed by Arg-234.

It belongs to the THI4 family. As to quaternary structure, homooctamer; tetramer of dimers. Fe(2+) serves as cofactor.

The enzyme catalyses hydrogen sulfide + glycine + NAD(+) = ADP-5-ethyl-4-methylthiazole-2-carboxylate + nicotinamide + 3 H2O + H(+). It participates in cofactor biosynthesis; thiamine diphosphate biosynthesis. Involved in the biosynthesis of the thiazole moiety of thiamine. Catalyzes the conversion of NAD and glycine to adenosine diphosphate 5-(2-hydroxyethyl)-4-methylthiazole-2-carboxylate (ADT), an adenylated thiazole intermediate, using free sulfide as a source of sulfur. The sequence is that of Thiamine thiazole synthase from Methanothermobacter thermautotrophicus (strain ATCC 29096 / DSM 1053 / JCM 10044 / NBRC 100330 / Delta H) (Methanobacterium thermoautotrophicum).